A 236-amino-acid chain; its full sequence is 7-cyano-7-deazaguanine synthase (236 aa).

An ATP-binding site is contributed by 7–17 (CSGGLDSVSLA). Zn(2+) contacts are provided by C185, C193, C196, and C199.

Belongs to the QueC family. It depends on Zn(2+) as a cofactor.

The enzyme catalyses 7-carboxy-7-deazaguanine + NH4(+) + ATP = 7-cyano-7-deazaguanine + ADP + phosphate + H2O + H(+). It functions in the pathway purine metabolism; 7-cyano-7-deazaguanine biosynthesis. Its function is as follows. Catalyzes the ATP-dependent conversion of 7-carboxy-7-deazaguanine (CDG) to 7-cyano-7-deazaguanine (preQ(0)). In Rhizobium meliloti (strain 1021) (Ensifer meliloti), this protein is 7-cyano-7-deazaguanine synthase.